We begin with the raw amino-acid sequence, 711 residues long: Long-chain-fatty-acid--CoA ligase 4 (711 aa).

A helical; Signal-anchor for type III membrane protein transmembrane segment spans residues 8–28 (LTIILLPVHLLITIYSALIFI). Over 29 to 711 (PWYFLTNAKK…KDIERMYGGK (683 aa)) the chain is Cytoplasmic. Ser-447 bears the Phosphoserine mark.

This sequence belongs to the ATP-dependent AMP-binding enzyme family. Mg(2+) serves as cofactor.

It localises to the mitochondrion outer membrane. Its subcellular location is the peroxisome membrane. The protein resides in the microsome membrane. The protein localises to the endoplasmic reticulum membrane. It is found in the cell membrane. It catalyses the reaction a long-chain fatty acid + ATP + CoA = a long-chain fatty acyl-CoA + AMP + diphosphate. It carries out the reaction (5Z,8Z,11Z,14Z)-eicosatetraenoate + ATP + CoA = (5Z,8Z,11Z,14Z)-eicosatetraenoyl-CoA + AMP + diphosphate. The enzyme catalyses hexadecanoate + ATP + CoA = hexadecanoyl-CoA + AMP + diphosphate. The catalysed reaction is (E)-hexadec-2-enoate + ATP + CoA = (2E)-hexadecenoyl-CoA + AMP + diphosphate. It catalyses the reaction 15-hydroxy-(5Z,8Z,11Z,13E)-eicosatetraenoate + ATP + CoA = 15-hydroxy-(5Z,8Z,11Z,13E)-eicosatetraenoyl-CoA + AMP + diphosphate. It carries out the reaction 12-hydroxy-(5Z,8Z,10E,14Z)-eicosatetraenoate + ATP + CoA = 12-hydroxy-(5Z,8Z,10E,14Z)-eicosatetraenoyl-CoA + AMP + diphosphate. The enzyme catalyses 5-hydroxy-(6E,8Z,11Z,14Z)-eicosatetraenoate + ATP + CoA = 5-hydroxy-(6E,8Z,11Z,14Z)-eicosatetraenoyl-CoA + AMP + diphosphate. The catalysed reaction is 5,6-epoxy-(8Z,11Z,14Z)-eicosatrienoate + ATP + CoA = 5,6-epoxy-(8Z,11Z,14Z)-eicosatrienoyl-CoA + AMP + diphosphate. It catalyses the reaction 14,15-epoxy-(5Z,8Z,11Z)-eicosatrienoate + ATP + CoA = 14,15-epoxy-(5Z,8Z,11Z)-eicosatrienoyl-CoA + AMP + diphosphate. It carries out the reaction 11,12-epoxy-(5Z,8Z,14Z)-eicosatrienoate + ATP + CoA = 11,12-epoxy-(5Z,8Z,14Z)-eicosatrienoyl-CoA + AMP + diphosphate. The enzyme catalyses 8,9-epoxy-(5Z,11Z,14Z)-eicosatrienoate + ATP + CoA = 8,9-epoxy-(5Z,11Z,14Z)-eicosatrienoyl-CoA + AMP + diphosphate. With respect to regulation, both triacsin C and rosiglitazone inhibit arachidonoyl-CoA ligase activity. Functionally, catalyzes the conversion of long-chain fatty acids to their active form acyl-CoA for both synthesis of cellular lipids, and degradation via beta-oxidation. Preferentially activates arachidonate and eicosapentaenoate as substrates. Preferentially activates 8,9-EET &gt; 14,15-EET &gt; 5,6-EET &gt; 11,12-EET. Modulates glucose-stimulated insulin secretion by regulating the levels of unesterified EETs. Modulates prostaglandin E2 secretion. This Homo sapiens (Human) protein is Long-chain-fatty-acid--CoA ligase 4 (ACSL4).